The chain runs to 209 residues: Ribosomal RNA large subunit methyltransferase E (209 aa).

Residues Gly-63, Trp-65, Asp-83, Asp-99, and Asp-124 each coordinate S-adenosyl-L-methionine. Residue Lys-164 is the Proton acceptor of the active site.

This sequence belongs to the class I-like SAM-binding methyltransferase superfamily. RNA methyltransferase RlmE family.

The protein localises to the cytoplasm. It catalyses the reaction uridine(2552) in 23S rRNA + S-adenosyl-L-methionine = 2'-O-methyluridine(2552) in 23S rRNA + S-adenosyl-L-homocysteine + H(+). In terms of biological role, specifically methylates the uridine in position 2552 of 23S rRNA at the 2'-O position of the ribose in the fully assembled 50S ribosomal subunit. This is Ribosomal RNA large subunit methyltransferase E from Baumannia cicadellinicola subsp. Homalodisca coagulata.